Here is a 352-residue protein sequence, read N- to C-terminus: DNA polymerase IV (352 aa).

In terms of domain architecture, UmuC spans 6–186 (IIHIDMDAFY…LPLGKIPGAG (181 aa)). Mg(2+) is bound by residues aspartate 10 and aspartate 104. The active site involves glutamate 105.

Belongs to the DNA polymerase type-Y family. In terms of assembly, monomer. Mg(2+) serves as cofactor.

The protein resides in the cytoplasm. It catalyses the reaction DNA(n) + a 2'-deoxyribonucleoside 5'-triphosphate = DNA(n+1) + diphosphate. Its function is as follows. Poorly processive, error-prone DNA polymerase involved in untargeted mutagenesis. Copies undamaged DNA at stalled replication forks, which arise in vivo from mismatched or misaligned primer ends. These misaligned primers can be extended by PolIV. Exhibits no 3'-5' exonuclease (proofreading) activity. May be involved in translesional synthesis, in conjunction with the beta clamp from PolIII. This is DNA polymerase IV from Neisseria gonorrhoeae (strain ATCC 700825 / FA 1090).